The chain runs to 1170 residues: Integrin alpha-2 (1170 aa).

An N-terminal signal peptide occupies residues 1–18; the sequence is PLQLVLVFSQGILNCCVA. Residues 19–1121 are Extracellular-facing; sequence YNVGLPKAKI…KPHEKVEVPT (1103 aa). FG-GAP repeat units lie at residues 23–81 and 90–150; these read LPKA…TTTC and TSMS…LRTS. A disulfide bond links Cys72 and Cys81. Asn94, Asn101, and Asn332 each carry an N-linked (GlcNAc...) asparagine glycan. The 178-residue stretch at 177–354 folds into the VWFA domain; sequence WDAVKNFLEK…TIGEQIFSIE (178 aa). FG-GAP repeat units lie at residues 355-409, 412-464, 466-528, 529-587, and 591-653; these read GTVQ…LIFS, AFEQ…ENGN, TVIQ…ILNW, HQFL…MIRL, and QKIL…FTPK. Residues Asn421, Asn449, and Asn464 are each glycosylated (N-linked (GlcNAc...) asparagine). The Cell attachment site signature appears at 472-474; that stretch reads RGD. Residues Asp488, Asn490, Asp492, Asp496, Asp552, Asn554, Asp556, Asp560, Asp616, Asn618, Asp620, and Asp624 each contribute to the Ca(2+) site. Cys669 and Cys726 form a disulfide bridge. N-linked (GlcNAc...) asparagine glycosylation is found at Asn688 and Asn748. 2 cysteine pairs are disulfide-bonded: Cys778/Cys784 and Cys854/Cys865. Asn945 carries N-linked (GlcNAc...) asparagine glycosylation. 2 disulfides stabilise this stretch: Cys1008–Cys1039 and Cys1044–Cys1049. N-linked (GlcNAc...) asparagine glycosylation is found at Asn1063 and Asn1070. Residues 1122–1143 traverse the membrane as a helical segment; it reads GVIVGSVIAGILLLLALVAILW. The Cytoplasmic segment spans residues 1144–1170; it reads KLGFFKRKYEKMAKNPDETDETTELNS. Positions 1146-1150 match the GFFKR motif motif; the sequence is GFFKR.

Belongs to the integrin alpha chain family. In terms of assembly, heterodimer of an alpha and a beta subunit. Alpha-2 associates with beta-1. Interacts with HPS5 and RAB21.

It localises to the membrane. Integrin alpha-2/beta-1 is a receptor for laminin, collagen, collagen C-propeptides, fibronectin and E-cadherin. It recognizes the proline-hydroxylated sequence G-F-P-G-E-R in collagen. It is responsible for adhesion of platelets and other cells to collagens, modulation of collagen and collagenase gene expression, force generation and organization of newly synthesized extracellular matrix. In Bos taurus (Bovine), this protein is Integrin alpha-2 (ITGA2).